The sequence spans 341 residues: Shk1 kinase-binding protein 15 (341 aa).

5 WD repeats span residues 33–70 (AHEGALTALAVDGIYLASTSSDETIKIFDHTRNVQIAD), 77–114 (IANACIRDMCFTKNHLLACHDNGQISMWSKGSWLLVHT), 119–157 (SHKGITGIAVHPSEKLALTVGGDGKLRLWDLVRGKGGKV), 197–234 (SSKSQLNALCLYQSKLIVGRDNGTVLVLDTSDGKILHE), and 237–274 (AHKKRVKSVYPVDDYLITASSDGSVCIWDKDWNLVIEH). Positions 293 to 341 (NSEPKNVEDEAAKRQSLDSETSETSSESESESEYYSTSKQPPVKRTKHA) are disordered. The segment covering 297-309 (KNVEDEAAKRQSL) has biased composition (basic and acidic residues).

Functionally, negatively regulates pak1/shk1 kinase activity leading to proper execution of cytoskeletal remodeling and cytokinetic functions. In terms of biological role, interacts with pak1/shk1. The protein is Shk1 kinase-binding protein 15 (skb15) of Schizosaccharomyces pombe (strain 972 / ATCC 24843) (Fission yeast).